A 225-amino-acid chain; its full sequence is Uracil-DNA glycosylase (225 aa).

D65 functions as the Proton acceptor in the catalytic mechanism.

Belongs to the uracil-DNA glycosylase (UDG) superfamily. UNG family.

The protein localises to the cytoplasm. It carries out the reaction Hydrolyzes single-stranded DNA or mismatched double-stranded DNA and polynucleotides, releasing free uracil.. Functionally, excises uracil residues from the DNA which can arise as a result of misincorporation of dUMP residues by DNA polymerase or due to deamination of cytosine. The chain is Uracil-DNA glycosylase from Clostridium perfringens (strain ATCC 13124 / DSM 756 / JCM 1290 / NCIMB 6125 / NCTC 8237 / Type A).